We begin with the raw amino-acid sequence, 186 residues long: MLGDCLLIIAIAFGTALAGEGITWLLVYRSDHYKRLKADMDKKTKKLEKKKQEVGDTNDKNIKRKLEREEERLKATNRDMSMFKMKSMFAIGLAFTALLSTFNSIFEGRVVAKLPFYPIGFIQGLSHRNLIGEDMTDCSFIFLYILCTMTVRQNLQKILGFAPSRAMARQQSSPWAPPNSQMNYLR.

Residues 1 to 6 (MLGDCL) lie on the Cytoplasmic side of the membrane. Residues 7–27 (LIIAIAFGTALAGEGITWLLV) form a helical membrane-spanning segment. Topologically, residues 28–87 (YRSDHYKRLKADMDKKTKKLEKKKQEVGDTNDKNIKRKLEREEERLKATNRDMSMFKMKS) are lumenal. Residues 30–86 (SDHYKRLKADMDKKTKKLEKKKQEVGDTNDKNIKRKLEREEERLKATNRDMSMFKMK) are a coiled coil. A helical membrane pass occupies residues 88-108 (MFAIGLAFTALLSTFNSIFEG). Residues 109–134 (RVVAKLPFYPIGFIQGLSHRNLIGED) are Cytoplasmic-facing. Positions 135–151 (MTDCSFIFLYILCTMTV) form an intramembrane region, pore-forming. The Cytoplasmic segment spans residues 152-186 (RQNLQKILGFAPSRAMARQQSSPWAPPNSQMNYLR).

The protein belongs to the TMCO1 family. Homodimer and homotetramer.

The protein localises to the endoplasmic reticulum membrane. Functionally, calcium-selective channel required to prevent calcium stores from overfilling. This Caenorhabditis elegans protein is Calcium load-activated calcium channel homolog.